Here is a 458-residue protein sequence, read N- to C-terminus: UDP-N-acetylmuramoylalanine--D-glutamate ligase (458 aa).

Position 118-124 (118-124) interacts with ATP; it reads GTNGKTT.

Belongs to the MurCDEF family.

The protein resides in the cytoplasm. The catalysed reaction is UDP-N-acetyl-alpha-D-muramoyl-L-alanine + D-glutamate + ATP = UDP-N-acetyl-alpha-D-muramoyl-L-alanyl-D-glutamate + ADP + phosphate + H(+). It functions in the pathway cell wall biogenesis; peptidoglycan biosynthesis. Its function is as follows. Cell wall formation. Catalyzes the addition of glutamate to the nucleotide precursor UDP-N-acetylmuramoyl-L-alanine (UMA). This chain is UDP-N-acetylmuramoylalanine--D-glutamate ligase, found in Ligilactobacillus salivarius (strain UCC118) (Lactobacillus salivarius).